A 553-amino-acid polypeptide reads, in one-letter code: Undecaprenyl phosphate-alpha-4-amino-4-deoxy-L-arabinose arabinosyl transferase 2 (553 aa).

Helical transmembrane passes span 6–26 (ASKI…LFPL), 85–105 (FAVR…IYLL), 115–135 (VAFV…VGTY), 137–157 (VLDP…FWAL), 178–198 (MAFM…MIPV), 208–228 (MLLY…PWVL), 261–281 (FWYY…LLPG), 295–315 (ELFF…IAKG), 317–337 (LPTY…KYGV), 352–372 (GYIN…IQLV), 386–406 (WVLA…CSTL), and 410–430 (HWLW…QAIP).

Belongs to the glycosyltransferase 83 family.

The protein resides in the cell inner membrane. The catalysed reaction is 4-amino-4-deoxy-alpha-L-arabinopyranosyl di-trans,octa-cis-undecaprenyl phosphate + lipid IVA = lipid IIA + di-trans,octa-cis-undecaprenyl phosphate.. It participates in lipopolysaccharide metabolism; 4-amino-4-deoxy-beta-L-arabinose-lipid A biosynthesis. Functionally, catalyzes the transfer of the L-Ara4N moiety of the glycolipid undecaprenyl phosphate-alpha-L-Ara4N to lipid A. The modified arabinose is attached to lipid A and is required for resistance to polymyxin and cationic antimicrobial peptides. This is Undecaprenyl phosphate-alpha-4-amino-4-deoxy-L-arabinose arabinosyl transferase 2 from Proteus mirabilis (strain HI4320).